We begin with the raw amino-acid sequence, 518 residues long: MTNLPEHQSSPTEQSSAEVKKIPTMIEGFDDISHGGLPQGRTTLVSGTSGTGKTLFAVQFLYNGITIFNEPGIFVTFEESPQDIIKNALSFGWNLQSLIDQGKLFILDASPDPDGQEVAGDFDLSALIERIQYAIRKYKATRVSIDSVTAVFQQYDAASVVRREIFRLAFRLKQLGVTTIMTTERVDEYGPVARFGVEEFVSDNVVILRNVLEGERRRRTVEILKLRGTTHMKGEYPFTINNGINIFPLGAMRLTQRSSNVRVSSGVKTLDEMCGGGFFKDSIILATGATGTGKTLLVSKFLETGCQQGERALLFAYEESRAQLSRNASSWGIDFEELERRGLLRIICAYPESAGLEDHLQIIKSEIADFKPSRVAIDSLSALARGVSNNAFRQFVIGVTGFAKQEEITGFFTNTTDQFMGSNSITESHISTITDTILLLQYVEIRGEMSRAINVFKMRGSWHDKGIREYVITEKGAEIRDSFRNFEGIISGTPTRISVDEKTELARIAKGMQDLESE.

The KaiC 1 domain occupies 1–247 (MTNLPEHQSS…FTINNGINIF (247 aa)). The ATP site is built by serine 49, glycine 50, threonine 51, glycine 52, lysine 53, threonine 54, and leucine 55. Threonine 54 serves as a coordination point for Mg(2+). Glutamate 78 acts as the Proton acceptor in CI (KaiC 1) in catalysis. Serine 90 contributes to the ATP binding site. The segment at 116 to 123 (QEVAGDFD) is B-loop, required to bind KaiB and SasA. ATP contacts are provided by lysine 225, leucine 226, arginine 227, threonine 229, and histidine 231. Residues 248–260 (PLGAMRLTQRSSN) form a linker region. Residues 261-518 (VRVSSGVKTL…AKGMQDLESE (258 aa)) form the KaiC 2 domain. ATP is bound by residues threonine 290, glycine 291, threonine 292, glycine 293, lysine 294, threonine 295, and leucine 296. A Mg(2+)-binding site is contributed by threonine 295. Glutamate 318 serves as a coordination point for Mg(2+). Residue glutamate 318 is the Proton acceptor in CII (KaiC 2) of the active site. Tryptophan 331 serves as a coordination point for ATP. Serine 431 is subject to Phosphoserine; by autocatalysis. A Phosphothreonine; by autocatalysis modification is found at threonine 432. ATP-binding residues include arginine 451, lysine 457, methionine 458, arginine 459, serine 461, histidine 463, and lysine 465. Positions 488–497 (GIISGTPTRI) are A-loop, interacts with KaiA.

It belongs to the KaiC family. In terms of assembly, homohexamer resembling 2 stacked donuts rings with a central pore nearly blocked on one side; hexamerization is dependent on ATP-binding. Binds 2 ATP per monomer, at the subunit interface on each ring. The KaiABC complex composition changes during the circadian cycle to control KaiC phosphorylation. Complexes KaiC(6), KaiA(2-4):KaiC(6), KaiB(6):KaiC(6) and KaiC(6):KaiB(6):KaiA(12) are among the most important forms, many form cooperatively. Interacts with SasA, probably as 1 SasA trimer:1 KaiC homohexamer, has highest affinity for unphosphorylated SasA. The CI domain binds to KaiB and SasA; as they have a similar fold they compete for the same site on CI. KaiB assumes a thioredoxin-like form called KaiB(fs) when bound to KaiC. The cofactor is Mg(2+). Phosphorylated on serine/threonine residues by autocatalysis. Both phosphorylated and unphosphorylated forms exist. Both autophosphorylates and autodephosphorylates. Phosphorylated form correlates with clock speed. Post-translationally, phosphorylated on serine and threonine residues by autocatalysis. Has a 4 step phosphorylation cycle; the autokinase acts first on Thr-432, then Ser-431. When Ser-431 is modified KaiC switches to an autophosphatase mode, acting first on phospho-Thr-432 then phospho-Ser-431.

The catalysed reaction is L-seryl-[protein] + ATP = O-phospho-L-seryl-[protein] + ADP + H(+). The enzyme catalyses L-threonyl-[protein] + ATP = O-phospho-L-threonyl-[protein] + ADP + H(+). It carries out the reaction ATP + H2O = ADP + phosphate + H(+). The interaction with KaiA enhances its phosphorylation status, while the interaction with KaiB decreases it. Central component of the KaiABC oscillator complex, which constitutes the main circadian regulator in cyanobacteria. Complex composition changes during the circadian cycle to control KaiC phosphorylation. KaiA stimulates KaiC autophosphorylation, while KaiB sequesters KaiA, leading to KaiC autodephosphorylation. Clock output pathways impact the RpaA transcriptional regulator. KaiC enhances the autophosphorylation activity of SasA, which then transfers its phosphate group to RpaA to activate it. KaiB and KaiC together enhance the phospho-RpaA dephosphatase activity of CikA. In terms of biological role, stimulates SasA autophosphorylation. Fully phosphorylated KaiC (tested with phosphomimetic Asp-431-432-Asp) is the best stimulant, requires the ATPase activity of the CII domain. Unphosphorylated SasA associates with KaiC and its autophosphorylation activity is enhanced. Phospho-SasA is released and associates with RpaA, transferring its phosphate group. Formation of the KaiA:KaiB complex is promoted by KaiC, helping switch KaiC from its autophosphorylation to autodephosphatase function. Its function is as follows. Has a weak, temperature-independent ATPase activity (about 14 molecules of ATP per day) that defines the circadian period. ATPase activity is mostly contributed by the CI domain; the CII domain augments the activity. The addition of KaiA increases activity. ATPase is inhibited during the KaiC phosphorylating phase and activated during the KaiC dephosphorylating phase. The polypeptide is Circadian clock oscillator protein KaiC (Thermosynechococcus vestitus (strain NIES-2133 / IAM M-273 / BP-1)).